Reading from the N-terminus, the 299-residue chain is Acetylglutamate kinase (299 aa).

Residues 72–73, Arg94, and Asn196 each bind substrate; that span reads GG.

Belongs to the acetylglutamate kinase family. ArgB subfamily.

It localises to the cytoplasm. It catalyses the reaction N-acetyl-L-glutamate + ATP = N-acetyl-L-glutamyl 5-phosphate + ADP. Its pathway is amino-acid biosynthesis; L-arginine biosynthesis; N(2)-acetyl-L-ornithine from L-glutamate: step 2/4. Its function is as follows. Catalyzes the ATP-dependent phosphorylation of N-acetyl-L-glutamate. This Burkholderia mallei (strain NCTC 10247) protein is Acetylglutamate kinase.